The chain runs to 66 residues: Large ribosomal subunit protein eL24 (66 aa).

Residues Cys6, Cys9, Cys32, and Cys36 each coordinate Zn(2+). The segment at 6–36 (CSFCGKTIEPGTGIMYVRKDGAILYFCSNKC) adopts a C4-type zinc-finger fold.

It belongs to the eukaryotic ribosomal protein eL24 family. In terms of assembly, part of the 50S ribosomal subunit. Forms a cluster with proteins L3 and L14. The cofactor is Zn(2+).

In terms of biological role, binds to the 23S rRNA. This Thermoplasma volcanium (strain ATCC 51530 / DSM 4299 / JCM 9571 / NBRC 15438 / GSS1) protein is Large ribosomal subunit protein eL24.